The primary structure comprises 763 residues: MSELLSVALFLASVLIYAWKAGRNTWWFAATLTVLGLFVILNITLYASDYFTGDGINDAVLYTLTNSLTGAGVGKYILPGIGIALALVAVFGALGWILRRRRHHPHHVGYSLLALLLALGSVDASPAFRQITELVKSQMRDGDPDFAVYYKEPAKTIPNPKLNLVYIYGESLERTYFDNDAFPNLTPELGALKNEGLDFSHTMQLPGTDYTIAGMVASQCGIPLFAPFEGNASASVSSFFPQNICLGDILKNSGYQNYFVQGANLRFAGKDVFLKSHGFDHLYGAEELKTVVADPSYRNDWGFYDDTVLDEAWKKFEALSRSGQRFSLFTLTVDTHHPDGFISRTCNRKRYDYDGKPNQSFSAVSCSQENIAEFINKIKASPWFKDTVIVVSSDHLAMNNTAWKYLNKQDRNNLFFILRGDKPQQETLAVKRNTMDNGATVLDILGGDNFIGLGRSSLSGQSLSEVFLNVKEKVLAMKPDIIRLWNFPKEIKAFTIDRDKNTIAFSGSHFRLPLLLRVSDKRVEPLPESEYSAPLRFQLADFAPRDNFVWIDRCYKMAQLWAPALALSTDWCVSQGQLGGQQTVQHVDKAQWQGKTAFKDTMIDMERYKGNVDTLKIVDNDIRYKADSFIFNVAGAPEEVKQFSGISRPESWGRWSNAQLGDEVKIEYKAPLPKKFDLVITAKAFGDNANRPIPVRVGNEEQTLVLGHDVSTITLHFNNPTDANTLVIAPPAPVSTNEGNILGHSPRKLGIGMVEIKVVNVEG.

Transmembrane regions (helical) follow at residues 1-21 (MSELLSVALFLASVLIYAWKA), 26-46 (WWFAATLTVLGLFVILNITLY), 77-97 (ILPGIGIALALVAVFGALGWI), and 108-128 (VGYSLLALLLALGSVDASPAF).

It belongs to the OpgB family.

It is found in the cell inner membrane. The enzyme catalyses a phosphatidylglycerol + a membrane-derived-oligosaccharide D-glucose = a 1,2-diacyl-sn-glycerol + a membrane-derived-oligosaccharide 6-(glycerophospho)-D-glucose.. Its pathway is glycan metabolism; osmoregulated periplasmic glucan (OPG) biosynthesis. Its function is as follows. Transfers a phosphoglycerol residue from phosphatidylglycerol to the membrane-bound nascent glucan backbones. This chain is Phosphoglycerol transferase I, found in Salmonella newport (strain SL254).